A 687-amino-acid chain; its full sequence is Chloride channel protein ClC-Kb (687 aa).

The Cytoplasmic segment spans residues 1-50; it reads MEEIVGLREGSPRKPVPLQELWRPCPRIRRNIQGSLEWLKERLFRVGEDW. Helical transmembrane passes span 51-82 and 91-111; these read YFLVALGVLMALISYAMNFAIGRVVRAHKWLY and LRYLSWTVYPVALLSFSSGFS. The segment at residues 116–127 is an intramembrane region (helical); that stretch reads PSSGGSGIPEVK. Ser-121 provides a ligand contact to chloride. Helical transmembrane passes span 141 to 160 and 161 to 180; these read IKNFGAKVVGLSCTLATGST and IFLGKLGPFVHLSVMIAAYL. Asn-193 carries an N-linked (GlcNAc...) asparagine glycan. Positions 203-224 form an intramembrane region, helical; that stretch reads AGAAVGVATVFAAPISGVLFSI. A helical membrane pass occupies residues 236–255; that stretch reads YWRGFFAATCGAFMFHLLAV. Glu-259, Glu-261, Asp-278, and Glu-281 together coordinate Ca(2+). 2 helical membrane passes run 282 to 310 and 325 to 342; these read IFFFVALGAICGILSCGYNYCQRTSLFFL and PLYSALAAVVLASITYPP. The helical intramembrane region spans 349–360; it reads ASRLSMSEYLET. The next 2 helical transmembrane spans lie at 400–420 and 421–440; these read GTLVFFLVMKFWMLILATTIP and IPAGYFLPIFVYGAAIGRLF. Phe-426 provides a ligand contact to chloride. Positions 464-496 form an intramembrane region, helical; it reads GAYALAGAAAFSGAVTHTLSTALLAFEVSGQIV. A helical transmembrane segment spans residues 500–520; the sequence is PVLMAVLAANAICQSYQPSFY. Over 521–687 the chain is Cytoplasmic; the sequence is DGTIIVKKLP…STLTNPPAPK (167 aa). CBS domains are found at residues 551 to 609 and 626 to 687; these read MNCT…DSAS and CPTQ…PAPK.

Belongs to the chloride channel (TC 2.A.49) family. CLCNKB subfamily. As to quaternary structure, homodimer. Interacts with BSND. In terms of processing, N-glycosylated. As to expression, expressed predominantly in the kidney. Expressed in all segments of the nephron examined, including the S2 segment and the glomerulus.

It localises to the basolateral cell membrane. It carries out the reaction chloride(in) = chloride(out). The catalysed reaction is iodide(out) = iodide(in). The enzyme catalyses nitrate(in) = nitrate(out). It catalyses the reaction bromide(in) = bromide(out). Anion-selective channel permeable to small monovalent anions with ion selectivity for chloride &gt; bromide &gt; nitrate &gt; iodide. Forms a homodimeric channel where each subunit has its own ion conduction pathway. May conduct double-barreled currents controlled by two types of gates, two fast gates that control each subunit independently and a slow common gate that opens and shuts off both subunits simultaneously. Assembles with the regulatory subunit BSND/Barttin for sorting at the basolateral plasma membrane domain and functional switch to the ion conducting state. CLCNKB:BSND channels display mostly a linear current-voltage relationship controlled by common gate. Mediates chloride conductance along nephron segments, namely the thick ascending limb of Henle's loop, convoluted tubule and the collecting duct, contributing to the maintenance of systemic acid-base and electrolyte homeostasis. Conducts chloride currents in the stria vascularis of the inner ear to establish the endocochlear potential necessary for normal hearing. The polypeptide is Chloride channel protein ClC-Kb (Rattus norvegicus (Rat)).